The chain runs to 574 residues: uncharacterized protein (574 aa).

Transmembrane regions (helical) follow at residues 14 to 34 (FFPTLWLILAPLILSPLLFFG), 54 to 74 (VVPLAVTSFIPMIALPFLGIV), 124 to 144 (WLMAGFMIITSFISLWISDTA), 205 to 225 (ICKCMMLLVAHASLIGGTGTI), 253 to 273 (SWMAFAIPPMIFYMFSSWFIV), 323 to 343 (LVIFVLAVLSWVSSDPKVIPG), 350 to 370 (KGYVTDSCSGLVAVFLLFIWP), 403 to 423 (FPWSIILLLGAGFAISDAVRV), 441 to 461 (MPFFVMQIILSIVVVVMTEFS), 485 to 505 (PLYFSIPTAIGPSFSFMLPMA), and 520 to 540 (MIDMVSCGVFLNIFCIAITAI). N-linked (GlcNAc...) asparagine glycans are attached at residues N565 and N569.

It belongs to the SLC13A/DASS transporter (TC 2.A.47) family. NADC subfamily.

Its subcellular location is the membrane. This is an uncharacterized protein from Caenorhabditis elegans.